Consider the following 127-residue polypeptide: Histone H2B.2 (127 aa).

A disordered region spans residues methionine 1–glutamate 35. Lysine 7 and lysine 8 each carry N6-acetyllysine; alternate. Residues lysine 7 and lysine 8 each participate in a glycyl lysine isopeptide (Lys-Gly) (interchain with G-Cter in SUMO); alternate cross-link. Serine 11 carries the phosphoserine modification. Positions serine 11–aspartate 24 are enriched in low complexity. An N6-acetyllysine modification is found at lysine 12. Residue lysine 120 forms a Glycyl lysine isopeptide (Lys-Gly) (interchain with G-Cter in ubiquitin) linkage.

It belongs to the histone H2B family. The nucleosome is a histone octamer containing two molecules each of H2A, H2B, H3 and H4 assembled in one H3-H4 heterotetramer and two H2A-H2B heterodimers. The octamer wraps approximately 147 bp of DNA. Post-translationally, monoubiquitinated by the UBC2-BRE1 complex to form H2BK123ub1. H2BK123ub1 gives a specific tag for epigenetic transcriptional activation and is also prerequisite for H3K4me and H3K79me formation. H2BK123ub1 also modulates the formation of double-strand breaks during meiosis and is a prerequisite for DNA-damage checkpoint activation. In terms of processing, phosphorylated by STE20 to form H2BS10ph during progression through meiotic prophase. May be correlated with chromosome condensation. Acetylation of N-terminal lysines and particularly formation of H2BK11ac has a positive effect on transcription. Post-translationally, sumoylation to form H2BK6su or H2BK7su occurs preferentially near the telomeres and represses gene transcription.

The protein resides in the nucleus. It localises to the chromosome. Its function is as follows. Core component of nucleosome. Nucleosomes wrap and compact DNA into chromatin, limiting DNA accessibility to the cellular machineries which require DNA as a template. Histones thereby play a central role in transcription regulation, DNA repair, DNA replication and chromosomal stability. DNA accessibility is regulated via a complex set of post-translational modifications of histones, also called histone code, and nucleosome remodeling. In Eremothecium gossypii (strain ATCC 10895 / CBS 109.51 / FGSC 9923 / NRRL Y-1056) (Yeast), this protein is Histone H2B.2 (HTB2).